A 1619-amino-acid chain; its full sequence is ATP-dependent helicase ULS1 (1619 aa).

The short motif at 7-10 is the SUMO interacting motif; type a 1 element; it reads IDLT. The segment covering 86–102 has biased composition (polar residues); the sequence is STFNNEKSSNEVKQQQV. 4 disordered regions span residues 86-123, 200-279, 347-371, and 429-450; these read STFNNEKSSNEVKQQQVLKEETMGSSNDEKKTQESSPS, NNKP…VESS, PILPSKNMDHTTHNSHDSEQKNSSI, and SGSNSIPTSETDAQSSSSSVLQ. Basic and acidic residues predominate over residues 103 to 118; that stretch reads LKEETMGSSNDEKKTQ. Serine 121 is subject to Phosphoserine. Residues 200–210 are compositionally biased toward polar residues; sequence NNKPSQQQFSD. The span at 211–226 shows a compositional bias: basic and acidic residues; sequence PETKDNSLKSENKDQI. Composition is skewed to polar residues over residues 242-259 and 269-279; these read SAFQDSETQNNSKNTIPN and LPSNLSSVESS. The segment covering 353–366 has biased composition (basic and acidic residues); that stretch reads NMDHTTHNSHDSEQ. An SUMO interacting motif; type b 1 motif is present at residues 371-378; the sequence is IIILSDED. Positions 470–473 match the SUMO interacting motif; type a 2 motif; that stretch reads LDTL. The SUMO interacting motif; type b 2 motif lies at 543 to 550; it reads ILVDEAEN. The Helicase ATP-binding domain maps to 956–1157; sequence QVENSAKKGG…YSLIRFLRIP (202 aa). 969–976 serves as a coordination point for ATP; that stretch reads DDMGLGKT. The RING-type zinc-finger motif lies at 1330-1386; it reads CFWCMEQLEPEAMSVLTGCGHLICDTCIEPFIEESSMLPQAKKTKGGAFAIPCKDCQ. The region spanning 1447–1606 is the Helicase C-terminal domain; that stretch reads QCIQVIQRVF…GKIKEVNSLG (160 aa).

The protein belongs to the SNF2/RAD54 helicase family. Interacts with CDC3, CDC11, EBP2, SIR4, UBC4 and SUMO/SMT3.

It localises to the nucleus. ATP-dependent helicase involved mating type switching and in silencing interference through its interaction with the silencing regulator SIR4. Cooperates with UBC4 and UBC5 to mediate ubiquitination of SUMO conjugates. This is ATP-dependent helicase ULS1 (ULS1) from Saccharomyces cerevisiae (strain ATCC 204508 / S288c) (Baker's yeast).